A 491-amino-acid chain; its full sequence is Trehalose-6-phosphate synthase (491 aa).

Arg22 is a binding site for D-glucose 6-phosphate. 42–43 (GG) contacts UDP-alpha-D-glucose. D-glucose 6-phosphate-binding residues include Tyr100 and Asp154. 2 residues coordinate UDP-alpha-D-glucose: Arg296 and Lys301. Arg334 serves as a coordination point for D-glucose 6-phosphate. UDP-alpha-D-glucose is bound at residue 399-403 (LVAKE).

Belongs to the glycosyltransferase 20 family. Homotetramer.

It carries out the reaction ADP-alpha-D-glucose + D-glucose 6-phosphate = alpha,alpha-trehalose 6-phosphate + ADP + H(+). The enzyme catalyses CDP-alpha-D-glucose + D-glucose 6-phosphate = alpha,alpha-trehalose 6-phosphate + CDP + H(+). It catalyses the reaction GDP-alpha-D-glucose + D-glucose 6-phosphate = alpha,alpha-trehalose 6-phosphate + GDP + H(+). The catalysed reaction is TDP-alpha-D-glucose + D-glucose 6-phosphate = 5-methyl-UDP + alpha,alpha-trehalose 6-phosphate + H(+). It carries out the reaction D-glucose 6-phosphate + UDP-alpha-D-glucose = alpha,alpha-trehalose 6-phosphate + UDP + H(+). It participates in glycan biosynthesis; trehalose biosynthesis. Its function is as follows. Probably involved in the osmoprotection via the biosynthesis of trehalose and in the production of glycogen and alpha-glucan via the TreS-Pep2 branch involved in the biosynthesis of maltose-1-phosphate (M1P). Catalyzes the transfer of glucose from UDP-glucose (UDP-Glc) to D-glucose 6-phosphate (Glc-6-P) to form trehalose-6-phosphate. Probably also able to use ADP-Glc, CDP-Glc, GDP-Glc and TDP-Glc as glucosyl donors. The sequence is that of Trehalose-6-phosphate synthase from Mycolicibacterium vanbaalenii (strain DSM 7251 / JCM 13017 / BCRC 16820 / KCTC 9966 / NRRL B-24157 / PYR-1) (Mycobacterium vanbaalenii).